The following is a 467-amino-acid chain: Ribulose bisphosphate carboxylase large chain (467 aa).

Position 6 is an N6,N6,N6-trimethyllysine (Lys-6). The substrate site is built by Asn-115 and Thr-165. Catalysis depends on Lys-167, which acts as the Proton acceptor. Lys-169 contacts substrate. Mg(2+)-binding residues include Lys-193, Asp-195, and Glu-196. Lys-193 bears the N6-carboxylysine mark. His-286 (proton acceptor) is an active-site residue. Residues Arg-287, His-319, and Ser-371 each contribute to the substrate site.

This sequence belongs to the RuBisCO large chain family. Type I subfamily. Heterohexadecamer of 8 large chains and 8 small chains; disulfide-linked. The disulfide link is formed within the large subunit homodimers. Requires Mg(2+) as cofactor. In terms of processing, the disulfide bond which can form in the large chain dimeric partners within the hexadecamer appears to be associated with oxidative stress and protein turnover.

Its subcellular location is the plastid. It localises to the chloroplast. The enzyme catalyses 2 (2R)-3-phosphoglycerate + 2 H(+) = D-ribulose 1,5-bisphosphate + CO2 + H2O. It catalyses the reaction D-ribulose 1,5-bisphosphate + O2 = 2-phosphoglycolate + (2R)-3-phosphoglycerate + 2 H(+). RuBisCO catalyzes two reactions: the carboxylation of D-ribulose 1,5-bisphosphate, the primary event in carbon dioxide fixation, as well as the oxidative fragmentation of the pentose substrate in the photorespiration process. Both reactions occur simultaneously and in competition at the same active site. The chain is Ribulose bisphosphate carboxylase large chain from Cedrus atlantica (Atlas cedar).